The sequence spans 396 residues: Pinosylvin synthase 1 (396 aa).

Position 60–63 (60–63 (KFKR)) interacts with substrate. Cys-170 is an active-site residue. Residues Leu-273 and 311–313 (GGH) contribute to the substrate site.

This sequence belongs to the thiolase-like superfamily. Chalcone/stilbene synthases family. Homodimer.

It localises to the cytoplasm. It catalyses the reaction (E)-cinnamoyl-CoA + 3 malonyl-CoA + 3 H(+) = (E)-pinosylvin + 4 CO2 + 4 CoA. The enzyme catalyses 3-phenylpropanoyl-CoA + 3 malonyl-CoA + 3 H(+) = dihydropinosylvin + 4 CO2 + 4 CoA. It functions in the pathway phytoalexin biosynthesis; pinosylvin biosynthesis. Functionally, catalyzes the production of pinosylvin from cinnamoyl-CoA and malonyl-CoA, and dihydropinosylvin from dihydrocinnamoyl-CoA. The chain is Pinosylvin synthase 1 from Pinus strobus (Eastern white pine).